Here is a 91-residue protein sequence, read N- to C-terminus: Small ribosomal subunit protein bS6 (91 aa).

This sequence belongs to the bacterial ribosomal protein bS6 family.

In terms of biological role, binds together with bS18 to 16S ribosomal RNA. This Leptospira borgpetersenii serovar Hardjo-bovis (strain JB197) protein is Small ribosomal subunit protein bS6.